We begin with the raw amino-acid sequence, 424 residues long: Histidine--tRNA ligase (424 aa).

It belongs to the class-II aminoacyl-tRNA synthetase family. Homodimer.

The protein resides in the cytoplasm. It catalyses the reaction tRNA(His) + L-histidine + ATP = L-histidyl-tRNA(His) + AMP + diphosphate + H(+). The sequence is that of Histidine--tRNA ligase from Bacillus licheniformis (strain ATCC 14580 / DSM 13 / JCM 2505 / CCUG 7422 / NBRC 12200 / NCIMB 9375 / NCTC 10341 / NRRL NRS-1264 / Gibson 46).